The following is a 171-amino-acid chain: UPF0690 protein C1orf52 homolog A (171 aa).

Disordered regions lie at residues 1–56 and 126–171; these read MAAE…GPDE and NVYQ…KRKV. A compositionally biased stretch (basic and acidic residues) spans 47–56; that stretch reads EAKKLPGPDE. Acidic residues predominate over residues 146–160; sequence EEEAQEDSPPSDDEQ.

Belongs to the UPF0690 family.

The chain is UPF0690 protein C1orf52 homolog A from Xenopus laevis (African clawed frog).